A 475-amino-acid chain; its full sequence is MSPKTETKASVGFKAGVKDYRLTYYTPEYQTKDTDILAAFRVTPQPGVPPEEAGAAVAAESSTGTWTTVWTDGLTSLDRYKGRCYDIEPVPGEESQFIAYVAYPLDLFEEGSVTNLFTSIVGNVFGFKALRALRLEDLRIPPAYSKTFQGPPHGIQVERDKLNKYGRPLLGCTIKPKLGLSAKNYGRAVYECLRGGLDFTKDDENVNSQPFMRWRDRFVFCAEAIYKAQAETGEIKGHYLNATAGTCEEMMKRAIFARELGVPIVMHDYLTGGFTANTSLAHYCRDNGLLLHIHRAMHAVIDRQKNHGMHFRVLAKALRMSGGDHIHAGTVVGKLEGERDVTLGFVDLLRDDFIEKDRSRGIYFTQDWVSMPGVLPVASGGIHVWHMPALTEIFGDDSVLQFGGGTLGHPWGNAPGAVANRVALEACVQARNEGRDLAREGNEVIREASKWSPELAAACEIWKEIKFEFEAMDTL.

Residues 1-2 (MS) constitute a propeptide that is removed on maturation. Pro-3 is subject to N-acetylproline. Lys-14 is subject to N6,N6,N6-trimethyllysine. The substrate site is built by Asn-123 and Thr-173. The Proton acceptor role is filled by Lys-175. Lys-177 serves as a coordination point for substrate. 3 residues coordinate Mg(2+): Lys-201, Asp-203, and Glu-204. An N6-carboxylysine modification is found at Lys-201. His-294 functions as the Proton acceptor in the catalytic mechanism. The substrate site is built by Arg-295, His-327, and Ser-379.

The protein belongs to the RuBisCO large chain family. Type I subfamily. Heterohexadecamer of 8 large chains and 8 small chains; disulfide-linked. The disulfide link is formed within the large subunit homodimers. Requires Mg(2+) as cofactor. In terms of processing, the disulfide bond which can form in the large chain dimeric partners within the hexadecamer appears to be associated with oxidative stress and protein turnover.

The protein resides in the plastid. It localises to the chloroplast. It catalyses the reaction 2 (2R)-3-phosphoglycerate + 2 H(+) = D-ribulose 1,5-bisphosphate + CO2 + H2O. The enzyme catalyses D-ribulose 1,5-bisphosphate + O2 = 2-phosphoglycolate + (2R)-3-phosphoglycerate + 2 H(+). Functionally, ruBisCO catalyzes two reactions: the carboxylation of D-ribulose 1,5-bisphosphate, the primary event in carbon dioxide fixation, as well as the oxidative fragmentation of the pentose substrate in the photorespiration process. Both reactions occur simultaneously and in competition at the same active site. The chain is Ribulose bisphosphate carboxylase large chain from Picea sitchensis (Sitka spruce).